The primary structure comprises 1240 residues: DNA polymerase catalytic subunit (1240 aa).

Positions 1 to 22 (MFCAAGGPASPGGKPAARAASG) are enriched in low complexity. Disordered stretches follow at residues 1–44 (MFCA…RRQN), 646–695 (GLDK…RETG), and 1103–1139 (AAAP…ASKP). The segment covering 669 to 688 (NGDEDKDDDEDGDEDGDERE) has biased composition (acidic residues).

This sequence belongs to the DNA polymerase type-B family. In terms of assembly, forms a complex with the ssDNA-binding protein UL29, the DNA polymerase processivity factor, and the alkaline exonuclease. Interacts with the putative helicase-primase complex subunit UL8; this interaction may coordinate leading and lagging strand DNA synthesis at the replication fork.

It localises to the host nucleus. It carries out the reaction DNA(n) + a 2'-deoxyribonucleoside 5'-triphosphate = DNA(n+1) + diphosphate. The enzyme catalyses Endonucleolytic cleavage to 5'-phosphomonoester.. In terms of biological role, replicates viral genomic DNA. The replication complex is composed of six viral proteins: the DNA polymerase, processivity factor, primase, primase-associated factor, helicase, and ssDNA-binding protein. Additionally, the polymerase contains an intrinsic ribonuclease H (RNase H) activity that specifically degrades RNA/DNA heteroduplexes or duplex DNA substrates in the 5' to 3' direction. Therefore, it can catalyze the excision of the RNA primers that initiate the synthesis of Okazaki fragments at a replication fork during viral DNA replication. In Human herpesvirus 2 (strain HG52) (HHV-2), this protein is DNA polymerase catalytic subunit.